A 547-amino-acid chain; its full sequence is MAAKDVRFGDSARHRMVAGVNVLADAVKVTLGPKGRNVVLDRSFGAPTVTKDGVSVAKEIELKDKLENMGAQMVKEVASKTSDVAGDGTTTATVLAQSIVNEGMKFVAAGMNPMDLKRGIDKAVNAITEELKKISKPCTTSKEIAQVGSISANSDAPIGQIIADAMDKVGKEGVITVEDGSGLENELDVVEGMQFDRGYLSPYFINNADKQMAIMDDPFILLFDKKISNIRDLLPVLEQVAKAGKPLMIVAEDVDGEALATLVVNNIRGILKTCAVKAPGFGDRRKAMLEDMAILTGGTVIAEEVGLSLEKATLQDLGRAKRIEVGKENTTIIDGAGDGNAIKGRIAQINKQIEEVTSDYDKEKLQERKAKLAGGVAVIKVGAATEVEMKEKKARVEDALHATRAAVEEGIVPGGGVALLRAKAAAAAIKGDNHDQDAGVKIVLRAIEEPLRQIVKNCGDEPSVVVNKVLEGEGNFGYNAGTSEYGDMVAMGVLDPTKVTRTALQNAASIAGLMLTTDCMVADLPEDKAPAMPMGGGMGDMGGMGMM.

Residues 30-33 (TLGP), Lys51, 87-91 (DGTTT), Gly415, and Asp495 each bind ATP.

This sequence belongs to the chaperonin (HSP60) family. As to quaternary structure, forms a cylinder of 14 subunits composed of two heptameric rings stacked back-to-back. Interacts with the co-chaperonin GroES.

The protein localises to the cytoplasm. It catalyses the reaction ATP + H2O + a folded polypeptide = ADP + phosphate + an unfolded polypeptide.. In terms of biological role, together with its co-chaperonin GroES, plays an essential role in assisting protein folding. The GroEL-GroES system forms a nano-cage that allows encapsulation of the non-native substrate proteins and provides a physical environment optimized to promote and accelerate protein folding. The polypeptide is Chaperonin GroEL (Thiobacillus denitrificans (strain ATCC 25259 / T1)).